The sequence spans 693 residues: Elongation factor G (693 aa).

Residues 8 to 282 enclose the tr-type G domain; it reads EKTRNIGIMA…AVIDYLPSPL (275 aa). Residues 17-24, 81-85, and 135-138 contribute to the GTP site; these read AHIDAGKT, DTPGH, and NKMD.

This sequence belongs to the TRAFAC class translation factor GTPase superfamily. Classic translation factor GTPase family. EF-G/EF-2 subfamily.

It is found in the cytoplasm. Catalyzes the GTP-dependent ribosomal translocation step during translation elongation. During this step, the ribosome changes from the pre-translocational (PRE) to the post-translocational (POST) state as the newly formed A-site-bound peptidyl-tRNA and P-site-bound deacylated tRNA move to the P and E sites, respectively. Catalyzes the coordinated movement of the two tRNA molecules, the mRNA and conformational changes in the ribosome. This is Elongation factor G from Staphylococcus aureus (strain Mu3 / ATCC 700698).